Reading from the N-terminus, the 443-residue chain is Exodeoxyribonuclease 7 large subunit (443 aa).

This sequence belongs to the XseA family. In terms of assembly, heterooligomer composed of large and small subunits.

Its subcellular location is the cytoplasm. It catalyses the reaction Exonucleolytic cleavage in either 5'- to 3'- or 3'- to 5'-direction to yield nucleoside 5'-phosphates.. In terms of biological role, bidirectionally degrades single-stranded DNA into large acid-insoluble oligonucleotides, which are then degraded further into small acid-soluble oligonucleotides. This is Exodeoxyribonuclease 7 large subunit from Stenotrophomonas maltophilia (strain R551-3).